The following is a 257-amino-acid chain: Imidazole glycerol phosphate synthase subunit HisF (257 aa).

Active-site residues include D11 and D130.

Belongs to the HisA/HisF family. In terms of assembly, heterodimer of HisH and HisF.

Its subcellular location is the cytoplasm. It carries out the reaction 5-[(5-phospho-1-deoxy-D-ribulos-1-ylimino)methylamino]-1-(5-phospho-beta-D-ribosyl)imidazole-4-carboxamide + L-glutamine = D-erythro-1-(imidazol-4-yl)glycerol 3-phosphate + 5-amino-1-(5-phospho-beta-D-ribosyl)imidazole-4-carboxamide + L-glutamate + H(+). It participates in amino-acid biosynthesis; L-histidine biosynthesis; L-histidine from 5-phospho-alpha-D-ribose 1-diphosphate: step 5/9. Functionally, IGPS catalyzes the conversion of PRFAR and glutamine to IGP, AICAR and glutamate. The HisF subunit catalyzes the cyclization activity that produces IGP and AICAR from PRFAR using the ammonia provided by the HisH subunit. This is Imidazole glycerol phosphate synthase subunit HisF from Aliivibrio fischeri (strain MJ11) (Vibrio fischeri).